Consider the following 406-residue polypeptide: Tyrosine--tRNA ligase (406 aa).

Y35 is an L-tyrosine binding site. The 'HIGH' region signature appears at 40–49 (ATSTSLHIGH). 2 residues coordinate L-tyrosine: Y166 and Q170. The short motif at 226-230 (KMGKS) is the 'KMSKS' region element. K229 is a binding site for ATP. An S4 RNA-binding domain is found at 341–405 (ILLVDLMVSS…IGKKKILRII (65 aa)).

Belongs to the class-I aminoacyl-tRNA synthetase family. TyrS type 1 subfamily. Homodimer.

The protein localises to the cytoplasm. It carries out the reaction tRNA(Tyr) + L-tyrosine + ATP = L-tyrosyl-tRNA(Tyr) + AMP + diphosphate + H(+). Catalyzes the attachment of tyrosine to tRNA(Tyr) in a two-step reaction: tyrosine is first activated by ATP to form Tyr-AMP and then transferred to the acceptor end of tRNA(Tyr). The polypeptide is Tyrosine--tRNA ligase (Borrelia hermsii (strain HS1 / DAH)).